The chain runs to 239 residues: Pimeloyl-[acyl-carrier protein] methyl ester esterase (239 aa).

Substrate contacts are provided by residues Trp20, 77–78 (SM), and 138–142 (FISLQ). The Nucleophile role is filled by Ser77. Residues Asp192 and His220 contribute to the active site. Substrate is bound at residue His220.

The protein belongs to the AB hydrolase superfamily. Carboxylesterase BioH family. As to quaternary structure, monomer.

The protein resides in the cytoplasm. The enzyme catalyses 6-carboxyhexanoyl-[ACP] methyl ester + H2O = 6-carboxyhexanoyl-[ACP] + methanol + H(+). It participates in cofactor biosynthesis; biotin biosynthesis. The physiological role of BioH is to remove the methyl group introduced by BioC when the pimeloyl moiety is complete. It allows to synthesize pimeloyl-ACP via the fatty acid synthetic pathway through the hydrolysis of the ester bonds of pimeloyl-ACP esters. The chain is Pimeloyl-[acyl-carrier protein] methyl ester esterase from Legionella pneumophila (strain Lens).